The following is a 169-amino-acid chain: MSDLTKQMIYDIYVRLLHLNEQKANTSLQQFFKEAAEEDVAEIPKNMTSIHVIDCIGQHEPINNAGIARKMNLSKANVTKISTKLIKEEFINSYQLTDNKKEVYFKLTRKGRRIFDLHEKLHKKKELAFYQFLDSFSQEEQKAVLKFLEQLTSTLEAEQTDGTPDKPVK.

Positions Y10 to S153 constitute an HTH marR-type domain. Positions N64 to K87 form a DNA-binding region, H-T-H motif.

Homodimer.

Its function is as follows. Represses the expression of the yvmC-cypX operon, which is involved in pulcherriminic acid biosynthesis. Also negatively regulates yvmA, yvnB and its own expression. Positively regulates yisI expression. Acts by binding specifically to a 14-bp palindromic motif, the YvmB box, which is present in the promoter region of the target genes. This chain is HTH-type transcriptional regulator PchR, found in Bacillus subtilis (strain 168).